Here is a 545-residue protein sequence, read N- to C-terminus: ATP synthase subunit alpha (545 aa).

172–179 serves as a coordination point for ATP; it reads GDRKTGKT.

Belongs to the ATPase alpha/beta chains family. F-type ATPases have 2 components, CF(1) - the catalytic core - and CF(0) - the membrane proton channel. CF(1) has five subunits: alpha(3), beta(3), gamma(1), delta(1), epsilon(1). CF(0) has three main subunits: a(1), b(2) and c(9-12). The alpha and beta chains form an alternating ring which encloses part of the gamma chain. CF(1) is attached to CF(0) by a central stalk formed by the gamma and epsilon chains, while a peripheral stalk is formed by the delta and b chains.

The protein resides in the cell membrane. It catalyses the reaction ATP + H2O + 4 H(+)(in) = ADP + phosphate + 5 H(+)(out). Functionally, produces ATP from ADP in the presence of a proton gradient across the membrane. The alpha chain is a regulatory subunit. This chain is ATP synthase subunit alpha, found in Nocardia farcinica (strain IFM 10152).